A 55-amino-acid chain; its full sequence is uncharacterized protein (55 aa).

The helical transmembrane segment at Ser27–Phe44 threads the bilayer.

It localises to the membrane. This is an uncharacterized protein from Dictyostelium discoideum (Social amoeba).